We begin with the raw amino-acid sequence, 486 residues long: Alpha-L-arabinofuranosidase B (486 aa).

Residues 1–25 form the signal peptide; that stretch reads MLSLKAVLRFASVAVAVVLPTLAQA. An N-linked (GlcNAc...) asparagine glycan is attached at Asn-42. The tract at residues 45–342 is catalytic; sequence LVKQRADPQI…KLYWRSDGTP (298 aa). Asp-51 functions as the Proton acceptor in the catalytic mechanism. Catalysis depends on Glu-229, which acts as the Proton donor. N-linked (GlcNAc...) asparagine glycans are attached at residues Asn-302, Asn-416, and Asn-426. The ABD stretch occupies residues 359–467; that stretch reads SSADQTLYVG…AGSYLVSGGN (109 aa).

The protein belongs to the glycosyl hydrolase 43 family.

The protein resides in the secreted. It carries out the reaction Hydrolysis of terminal non-reducing alpha-L-arabinofuranoside residues in alpha-L-arabinosides.. Its pathway is glycan metabolism; L-arabinan degradation. Secreted arabinofuranosidase that causes degradation of rice cell wall components during infection. Required for virulence. This Pyricularia oryzae (strain 70-15 / ATCC MYA-4617 / FGSC 8958) (Rice blast fungus) protein is Alpha-L-arabinofuranosidase B.